Consider the following 621-residue polypeptide: MGVNAVHWFRKGLRLHDNPALRECIRGADTVRCVYILDPWFAGSSNVGINRWRFLLQCLEDLDANLRKLNSRLFVIRGQPADVFPRLFKEWSIAKLSIEYDSEPFGKERDAAIKKLASEAGVEVIVRISHTLYDLDKIIELNGGQPPLTYKRFQTLISRMEPLEMPVETITPEVMQKCTTPVSDDHDEKYGVPSLEELGFDTDGLPSAVWPGGETEALTRLERHLERKAWVANFERPRMNANSLLASPTGLSPYLRFGCLSCRLFYFKLTDLYKKVKKNSSPPLSLYGQLLWREFFYTAATNNPRFDKMEGNPICVQIPWDKNPEALAKWAEGRTGFPWIDAIMTQLRQEGWIHHLARHAVACFLTRGDLWISWEEGMKVFEELLLDADWSVNAGSWMWLSCSSFFQQFFHCYCPVGFGRRTDPNGDYIRRYLPVLRGFPAKYIYDPWNAPESVQKAAKCVIGVNYPKPMVNHAEASRLNIERMKQIYQQLSRYRGLGLLATVPSNPNGNGNGGLMSFSPGESISGCSSAGGAQLGTGDGQTVGVQTCALGDSHTGGSGVQQQGYCQASSILRYAHGDNQQSHLMQPGRASLGTGISAGKRPNPEEETQSVGPKVQRQSTN.

The Photolyase/cryptochrome alpha/beta domain occupies Val-3–Leu-132. 3 consecutive short sequence motifs (LIR) follow at residues Asn-50 to Phe-54, Asp-82 to Leu-87, and Lys-151 to Leu-156. An FAD-binding site is contributed by Ser-252. 4 consecutive short sequence motifs (LIR) follow at residues Leu-255–Leu-260, Asp-271–Val-276, Ser-285–Leu-290, and Thr-335–Trp-339. Position 289 (Gln-289) interacts with FAD. His-355 contributes to the FAD binding site. An LIR 8 motif is present at residues Lys-379–Leu-384. FAD is bound at residue Asp-387 to Asp-389. Short sequence motifs (LIR) lie at residues Gly-395–Leu-400, His-411–Val-416, Arg-430–Val-435, Gln-486–Leu-491, and Ser-492–Leu-497. A disordered region spans residues Gln-581–Asn-621.

It belongs to the DNA photolyase class-1 family. Component of the circadian core oscillator, which includes the CRY proteins, CLOCK or NPAS2, BMAL1 or BMAL2, CSNK1E, and the PER proteins. It depends on FAD as a cofactor. Requires (6R)-5,10-methylene-5,6,7,8-tetrahydrofolate as cofactor. Expressed in the pineal gland.

It is found in the cytoplasm. The protein localises to the nucleus. In terms of biological role, transcriptional repressor which forms a core component of the circadian clock. The circadian clock, an internal time-keeping system, regulates various physiological processes through the generation of approximately 24 hour circadian rhythms in gene expression, which are translated into rhythms in metabolism and behavior. It is derived from the Latin roots 'circa' (about) and 'diem' (day) and acts as an important regulator of a wide array of physiological functions including metabolism, sleep, body temperature, blood pressure, endocrine, immune, cardiovascular, and renal function. Consists of two major components: the central clock, residing in the suprachiasmatic nucleus (SCN) of the brain, and the peripheral clocks that are present in nearly every tissue and organ system. Both the central and peripheral clocks can be reset by environmental cues, also known as Zeitgebers (German for 'timegivers'). The predominant Zeitgeber for the central clock is light, which is sensed by retina and signals directly to the SCN. The central clock entrains the peripheral clocks through neuronal and hormonal signals, body temperature and feeding-related cues, aligning all clocks with the external light/dark cycle. Circadian rhythms allow an organism to achieve temporal homeostasis with its environment at the molecular level by regulating gene expression to create a peak of protein expression once every 24 hours to control when a particular physiological process is most active with respect to the solar day. Transcription and translation of core clock components (CLOCK, NPAS2, BMAL1, BMAL2, PER1, PER2, PER3, CRY1 and CRY2) plays a critical role in rhythm generation, whereas delays imposed by post-translational modifications (PTMs) are important for determining the period (tau) of the rhythms (tau refers to the period of a rhythm and is the length, in time, of one complete cycle). A diurnal rhythm is synchronized with the day/night cycle, while the ultradian and infradian rhythms have a period shorter and longer than 24 hours, respectively. Disruptions in the circadian rhythms contribute to the pathology of cardiovascular diseases, cancer, metabolic syndromes and aging. A transcription/translation feedback loop (TTFL) forms the core of the molecular circadian clock mechanism. Transcription factors, CLOCK or NPAS2 and BMAL1 or BMAL2, form the positive limb of the feedback loop, act in the form of a heterodimer and activate the transcription of core clock genes and clock-controlled genes (involved in key metabolic processes), harboring E-box elements (5'-CACGTG-3') within their promoters. The core clock genes: PER1/2/3 and CRY1/2 which are transcriptional repressors form the negative limb of the feedback loop and interact with the CLOCK|NPAS2-BMAL1|BMAL2 heterodimer inhibiting its activity and thereby negatively regulating their own expression. This heterodimer also activates nuclear receptors NR1D1/2 and RORA/B/G, which form a second feedback loop and which activate and repress BMAL1 transcription, respectively. CRY1 and CRY2 have redundant functions but also differential and selective contributions at least in defining the pace of the SCN circadian clock and its circadian transcriptional outputs. More potent transcriptional repressor in cerebellum and liver than CRY2, though more effective in lengthening the period of the SCN oscillator. On its side, CRY2 seems to play a critical role in tuning SCN circadian period by opposing the action of CRY1. With CRY2, is dispensable for circadian rhythm generation but necessary for the development of intercellular networks for rhythm synchrony. Capable of translocating circadian clock core proteins such as PER proteins to the nucleus. Interacts with CLOCK-BMAL1 independently of PER proteins and is found at CLOCK-BMAL1-bound sites, suggesting that CRY may act as a molecular gatekeeper to maintain CLOCK-BMAL1 in a poised and repressed state until the proper time for transcriptional activation. Represses CLOCK-BMAL1-mediated transcriptional activation. In Gallus gallus (Chicken), this protein is Cryptochrome-1 (CRY1).